We begin with the raw amino-acid sequence, 579 residues long: MAELLPGYSPSFKKPSEILRLSRRRSRSEASKTGLSPFSPGDVIKRVPGLRPFSPGPNKGAGVKRRNPFASLENTVCSPVKRRAETVAEYGAASLEPRALSAVRPSCLGQDSPEPPQFNSVEDVIWGDPLAADADPLVKTESPEKPAPACEIPKGSVTFPADWSLKTRLLFTSSHSFSWADHLKAQEEAQGLVMQCRATAVNLPHSIQEPKLSTDLRCAFQQSLVHWIHPSLPWVQLFPRIGVDRKMAGKNTPWSQDESLQQVLMSEWALSFTSLYNLLKAKLCPYFYVCTYQFTVLFRAAGLAGSDVITAVMSPTTRGLREAMKNEGITFSQPLVEDDTGKKQKKPEAASQGDINPEKENGTAEADEASDESDEDESFSWLEEMGVEDKIKKPDSISIKLRKEKNEVKLDHKPESVVLVKGTNTFTLLNFLINCKSIVAAAGLQAGLPPTLLSPVAFRGATMHALKARSVNVKTRVNSGYKDQFSLEITGPIMPHSLHSLTMLLQSAQRGSFSAGLYTHEPTAVFNTPIHSQAVKEISADLQNCGLHPCTVEQLTQVNELGKLSLRHLEMTDYRYTWK.

Disordered stretches follow at residues methionine 1–proline 68 and phenylalanine 331–phenylalanine 379. Residues aspartate 339 to glutamate 348 are compositionally biased toward basic and acidic residues. Residues glutamate 365–serine 378 are compositionally biased toward acidic residues.

This sequence belongs to the DONSON family. In terms of assembly, component of the replisome complex.

Its subcellular location is the nucleus. Its function is as follows. Replisome component that maintains genome stability by protecting stalled or damaged replication forks. After the induction of replication stress, required for the stabilization of stalled replication forks, the efficient activation of the intra-S-phase and G/2M cell-cycle checkpoints and the maintenance of genome stability. This is Protein downstream neighbor of son homolog from Xenopus laevis (African clawed frog).